A 391-amino-acid polypeptide reads, in one-letter code: S-adenosylmethionine synthase (391 aa).

Histidine 14 contributes to the ATP binding site. A Mg(2+)-binding site is contributed by aspartate 16. Glutamate 42 serves as a coordination point for K(+). Glutamate 55 and glutamine 98 together coordinate L-methionine. Positions 98–108 (QSPDIAMGVDE) are flexible loop. ATP is bound by residues 172–174 (DGK), 238–239 (RF), aspartate 247, 253–254 (RK), alanine 270, and lysine 274. Residue aspartate 247 coordinates L-methionine. Lysine 278 provides a ligand contact to L-methionine.

It belongs to the AdoMet synthase family. In terms of assembly, homotetramer; dimer of dimers. Requires Mg(2+) as cofactor. It depends on K(+) as a cofactor.

It is found in the cytoplasm. It carries out the reaction L-methionine + ATP + H2O = S-adenosyl-L-methionine + phosphate + diphosphate. It participates in amino-acid biosynthesis; S-adenosyl-L-methionine biosynthesis; S-adenosyl-L-methionine from L-methionine: step 1/1. Catalyzes the formation of S-adenosylmethionine (AdoMet) from methionine and ATP. The overall synthetic reaction is composed of two sequential steps, AdoMet formation and the subsequent tripolyphosphate hydrolysis which occurs prior to release of AdoMet from the enzyme. This chain is S-adenosylmethionine synthase, found in Clostridium tetani (strain Massachusetts / E88).